The sequence spans 454 residues: Tol-Pal system protein TolB (454 aa).

An N-terminal signal peptide occupies residues 1–21; that stretch reads MSLRPISLMLALLLTSAPALA.

It belongs to the TolB family. In terms of assembly, the Tol-Pal system is composed of five core proteins: the inner membrane proteins TolA, TolQ and TolR, the periplasmic protein TolB and the outer membrane protein Pal. They form a network linking the inner and outer membranes and the peptidoglycan layer.

It localises to the periplasm. In terms of biological role, part of the Tol-Pal system, which plays a role in outer membrane invagination during cell division and is important for maintaining outer membrane integrity. This Sphingopyxis alaskensis (strain DSM 13593 / LMG 18877 / RB2256) (Sphingomonas alaskensis) protein is Tol-Pal system protein TolB.